The primary structure comprises 614 residues: Signal recognition particle receptor subunit alpha homolog (614 aa).

A disordered region spans residues 119-244; it reads EASAKQVKAP…DRSRDSPDDV (126 aa). Over residues 149–160 the composition is skewed to basic and acidic residues; the sequence is QDDKKPVEKRVN. Positions 164-178 are enriched in pro residues; sequence APPPSKSQPSSPPTG. The segment covering 232-241 has biased composition (basic and acidic residues); the sequence is ALLDRSRDSP. Phosphoserine is present on residues Ser-237 and Ser-240. Position 246 is a phosphotyrosine (Tyr-246). A phosphoserine mark is found at Ser-268, Ser-278, and Ser-279. The span at 268–285 shows a compositional bias: acidic residues; that stretch reads SEDEADNEDASSEGEAEE. Residues 268 to 290 form a disordered region; that stretch reads SEDEADNEDASSEGEAEEQVQSK. The tract at residues 396 to 613 is NG domain; that stretch reads YTIIFCGVNG…NVNAVVNSLM (218 aa). Residues 402–409, 497–501, and 565–568 contribute to the GTP site; these read GVNGVGKS, DTAGR, and TKFD.

The protein belongs to the GTP-binding SRP family. As to quaternary structure, heterodimer of SrpRalpha and SrpRbeta. In 8-9 hours embryos, expression is seen in a segmental pattern along embryonic ventral midline.

The protein resides in the endoplasmic reticulum membrane. Its function is as follows. Component of the SRP (signal recognition particle) receptor. Ensures, in conjunction with the signal recognition particle, the correct targeting of the nascent secretory proteins to the endoplasmic reticulum membrane system. Forms a guanosine 5'-triphosphate (GTP)-dependent complex with the SRP subunit Srp54. SRP receptor compaction and GTPase rearrangement drive SRP-mediated cotranslational protein translocation into the ER. May have a role in axonogenesis. This chain is Signal recognition particle receptor subunit alpha homolog, found in Drosophila melanogaster (Fruit fly).